The chain runs to 505 residues: Phosphoethanolamine N-methyltransferase (505 aa).

The S-adenosyl-L-homocysteine site is built by glycine 76, arginine 81, aspartate 97, aspartate 122, valine 123, and asparagine 141. The phosphocholine site is built by serine 174, serine 179, glycine 180, arginine 184, and tyrosine 191. Residues 260–261 and tyrosine 269 contribute to the N-methylethanolamine phosphate site; that span reads QY. Tyrosine 269 is a binding site for phosphocholine. Residues valine 278, serine 279, glycine 305, aspartate 327, aspartate 353, cysteine 354, and arginine 370 each coordinate S-adenosyl-L-homocysteine. Phosphocholine contacts are provided by tyrosine 401, tyrosine 415, arginine 419, tyrosine 421, and lysine 487. N-methylethanolamine phosphate contacts are provided by residues tyrosine 401, tyrosine 415, 419-421, and lysine 487; that span reads RGY.

It belongs to the class I-like SAM-binding methyltransferase superfamily. PEAMT family.

It carries out the reaction phosphoethanolamine + S-adenosyl-L-methionine = N-methylethanolamine phosphate + S-adenosyl-L-homocysteine + H(+). The enzyme catalyses N-methylethanolamine phosphate + S-adenosyl-L-methionine = N,N-dimethylethanolamine phosphate + S-adenosyl-L-homocysteine + H(+). It catalyses the reaction N,N-dimethylethanolamine phosphate + S-adenosyl-L-methionine = phosphocholine + S-adenosyl-L-homocysteine + H(+). Its pathway is phospholipid metabolism; phosphatidylcholine biosynthesis; phosphocholine from phosphoethanolamine: step 1/1. Its activity is regulated as follows. Inhibited by phosphatidic acid. In terms of biological role, involved in phosphocholine biosynthesis. Catalyzes the N-methylation of phosphoethanolamine, phosphomonomethylethanolamine and phosphodimethylethanolamine, the three methylation steps required to convert phosphoethanolamine to phosphocholine (PC). This is Phosphoethanolamine N-methyltransferase from Triticum aestivum (Wheat).